A 117-amino-acid polypeptide reads, in one-letter code: uncharacterized protein (117 aa).

This is an uncharacterized protein from Fowlpox virus (strain NVSL) (FPV).